The sequence spans 176 residues: Scytalone dehydratase-like protein AacuK (176 aa).

The substrate site is built by Y26 and Y46. Catalysis depends on residues H81 and H107.

This sequence belongs to the scytalone dehydratase family.

It participates in secondary metabolite biosynthesis. Functionally, scytalone dehydratase-like protein; part of the gene cluster that mediates the biosynthesis of the tetrahydroxanthone dimer secalonic acid D. The pathway begins with the synthesis of atrochrysone thioester by the polyketide synthase AacuL. The atrochrysone carboxyl ACP thioesterase AacuM then breaks the thioester bond and releases the atrochrysone carboxylic acid from AacuL. Atrochrysone carboxylic acid is decarboxylated by the decarboxylase AacuI, and oxidized by the anthrone oxygenase AacuG to yield emodin. Emodin is then reduced to emodin hydroquinone by a yet unidentified oxidoreductase. A-ring reduction by the short chain dehydrogenase AacuN, dehydration by the scytalone dehydratase-like protein AacuK and probable spontaneous re-oxidation, results in overall deoxygenation to chrysophanol. Baeyer-Villiger oxidation by the Baeyer-Villiger monooxygenase (BVMO) AacuH then yields monodictyphenone. Monodictyphenone is transformed into compounds with the tetrahydroxanthone skeleton via methylesterification by the methyltransferase AacuQ, followed by the action of the flavin-dependent monooxygenase AacuC, the isomerase AacuP, and the short chain dehydrogenase/reductase AacuF or AacuD. AacuF and AacuD should accept the same compound as a substrate but perform the ketoreduction with a different stereoselectivity, thus yielding blennolides B and A, respectively. In the final step of the biosynthesis, the cytochrome P450 monooxygenase AacuE accepts blennolide B and/or blennolide A to conduct the dimerization reaction to furnish the tetrahydroxanthone dimers, secalonic acids D, B, and F. The polypeptide is Scytalone dehydratase-like protein AacuK (Aspergillus aculeatus (strain ATCC 16872 / CBS 172.66 / WB 5094)).